We begin with the raw amino-acid sequence, 641 residues long: FACT complex subunit SSRP1-A (641 aa).

A disordered region spans residues 459-561 (TDDDAVDPHL…DPNAPKRAMT (103 aa)). Over residues 476–487 (GDEESDEEDEDF) the composition is skewed to acidic residues. Residues 512–524 (GGEKEKLSKKEAS) show a composition bias toward basic and acidic residues. Residues 556–624 (PKRAMTPFMY…RYEKESAVYR (69 aa)) constitute a DNA-binding region (HMG box).

The protein belongs to the SSRP1 family. Component of the FACT complex, a stable heterodimer of SPT16 and SSRP1.

It is found in the nucleus. Its subcellular location is the chromosome. In terms of biological role, component of the FACT complex, a general chromatin factor that acts to reorganize nucleosomes. The FACT complex is involved in multiple processes that require DNA as a template such as mRNA elongation, DNA replication and DNA repair. During transcription elongation the FACT complex acts as a histone chaperone that both destabilizes and restores nucleosomal structure. It facilitates the passage of RNA polymerase II and transcription by promoting the dissociation of one histone H2A-H2B dimer from the nucleosome, then subsequently promotes the reestablishment of the nucleosome following the passage of RNA polymerase II. Binds specifically to double-stranded DNA. The chain is FACT complex subunit SSRP1-A (SSRP1-A) from Oryza sativa subsp. japonica (Rice).